We begin with the raw amino-acid sequence, 415 residues long: MSVQAPSVPDLRQQVHDAARRARGAARALASLSTETKNRALCTAADHVLMNTRTILDANTADLDAARAAGTPEAMLDRLALNPARVEGIADGLRQVAGLPDPIGEVIRGRTLPNGLQLRQQRVPLGVVGIVYEGRPNVTVDAFGLTLKSGNAVLLRGSSSAARSNAALVNALRAALATEGLDTDAVQLLPSEDRASVTHLIQARGLVDVVIPRGGAGLIDAVVRDAQVPTIETGVGNCHVFVHESADLDMAEEIVLNAKTRRPSVCNAAESLLIDAAIADVAVPRLTGALTAAGVTVHADPSEDELRAEFLSMDIALAIVDGVDGAISHINEYGTGHTEAIVTTDLAAAQRFSERVDAAAVMVNASTAFTDGEQFGFGAEIGISTQKLHARGPMGLPELTSTKWIVWGDGHTRPA.

Belongs to the gamma-glutamyl phosphate reductase family.

It localises to the cytoplasm. The enzyme catalyses L-glutamate 5-semialdehyde + phosphate + NADP(+) = L-glutamyl 5-phosphate + NADPH + H(+). It participates in amino-acid biosynthesis; L-proline biosynthesis; L-glutamate 5-semialdehyde from L-glutamate: step 2/2. In terms of biological role, catalyzes the NADPH-dependent reduction of L-glutamate 5-phosphate into L-glutamate 5-semialdehyde and phosphate. The product spontaneously undergoes cyclization to form 1-pyrroline-5-carboxylate. The protein is Gamma-glutamyl phosphate reductase of Mycolicibacterium vanbaalenii (strain DSM 7251 / JCM 13017 / BCRC 16820 / KCTC 9966 / NRRL B-24157 / PYR-1) (Mycobacterium vanbaalenii).